The following is a 147-amino-acid chain: uncharacterized protein (147 aa).

The interval 110-133 (VLEPPTPSQPAPTPEPAVKPQPIA) is disordered. A compositionally biased stretch (pro residues) spans 113–128 (PPTPSQPAPTPEPAVK).

This is an uncharacterized protein from Ictalurid herpesvirus 1 (strain Auburn) (IcHV-1).